The primary structure comprises 253 residues: uncharacterized protein (253 aa).

Residues Ile-17, Ser-36, Asp-62, Asn-89, Lys-123, Tyr-158, Lys-162, Val-191, and Thr-193 each contribute to the NADP(+) site. The Proton acceptor role is filled by Tyr-158. Lys-162 functions as the Lowers pKa of active site Tyr in the catalytic mechanism.

The protein belongs to the short-chain dehydrogenases/reductases (SDR) family.

The protein resides in the cytoplasm. The protein localises to the nucleus. This is an uncharacterized protein from Schizosaccharomyces pombe (strain 972 / ATCC 24843) (Fission yeast).